The following is a 432-amino-acid chain: Adenylosuccinate synthetase (432 aa).

GTP is bound by residues 13-19 (GDEGKGK) and 41-43 (GHT). The active-site Proton acceptor is the aspartate 14. Residues aspartate 14 and glycine 41 each contribute to the Mg(2+) site. IMP-binding positions include 14 to 17 (DEGK), 39 to 42 (NAGH), threonine 130, arginine 144, glutamine 225, threonine 240, and arginine 304. Histidine 42 functions as the Proton donor in the catalytic mechanism. 300–306 (ATTGRRR) contacts substrate. Residues arginine 306, 332–334 (KLD), and 414–416 (STG) each bind GTP.

The protein belongs to the adenylosuccinate synthetase family. As to quaternary structure, homodimer. It depends on Mg(2+) as a cofactor.

The protein resides in the cytoplasm. The catalysed reaction is IMP + L-aspartate + GTP = N(6)-(1,2-dicarboxyethyl)-AMP + GDP + phosphate + 2 H(+). It participates in purine metabolism; AMP biosynthesis via de novo pathway; AMP from IMP: step 1/2. Functionally, plays an important role in the de novo pathway of purine nucleotide biosynthesis. Catalyzes the first committed step in the biosynthesis of AMP from IMP. The polypeptide is Adenylosuccinate synthetase (Methylococcus capsulatus (strain ATCC 33009 / NCIMB 11132 / Bath)).